We begin with the raw amino-acid sequence, 122 residues long: Protein NIM1-INTERACTING 2 (122 aa).

Over residues 1-22 (MNNSLKKEERVEEDNGKSDGNR) the composition is skewed to basic and acidic residues. A disordered region spans residues 1 to 28 (MNNSLKKEERVEEDNGKSDGNRGKPSTE). The involved in NPR1/NIM1 interaction stretch occupies residues 39–45 (DEFFKIL). The Nuclear localization signal motif lies at 70-74 (KKRKR).

Interacts with NPR1 N-terminal region.

The protein localises to the nucleus. The sequence is that of Protein NIM1-INTERACTING 2 from Arabidopsis thaliana (Mouse-ear cress).